The sequence spans 182 residues: MHSDAFDLKALIRPVVDFPKPGVIFRDITPLFQSPRGLRYVADQFIERYVEAEFSHIGAMDARGFLIGSIIAHQLNKPLILFRKQGKLPADVLSEGYQTEYGEAFLEVHADSLCEGDSVLIFDDLIATGGTLLAAANLVRRTGAQVFEAAAIIDLPELDGSRRLQAAGVPTFCLTEFSLSEY.

The protein belongs to the purine/pyrimidine phosphoribosyltransferase family. Homodimer.

Its subcellular location is the cytoplasm. The enzyme catalyses AMP + diphosphate = 5-phospho-alpha-D-ribose 1-diphosphate + adenine. The protein operates within purine metabolism; AMP biosynthesis via salvage pathway; AMP from adenine: step 1/1. In terms of biological role, catalyzes a salvage reaction resulting in the formation of AMP, that is energically less costly than de novo synthesis. This chain is Adenine phosphoribosyltransferase, found in Pseudomonas putida (strain GB-1).